The sequence spans 142 residues: Hemoglobin subunit alpha-1 (142 aa).

S1 carries the post-translational modification N-acetylserine. One can recognise a Globin domain in the interval 1 to 142 (SLSDKDKAAV…VALALAERYR (142 aa)). H59 contacts O2. H88 provides a ligand contact to heme b.

Belongs to the globin family. In terms of assembly, hb1 is a heterotetramer of two alpha-1 chains and two beta chains. HbC is a heterotetramer of two alpha-1 chains and two beta-C chains. In terms of tissue distribution, red blood cells.

Involved in oxygen transport from gills to the various peripheral tissues. The chain is Hemoglobin subunit alpha-1 (hba1) from Trematomus newnesi (Dusky notothen).